Reading from the N-terminus, the 181-residue chain is Inner membrane-spanning protein YciB (181 aa).

The next 5 helical transmembrane spans lie at 8 to 28, 53 to 73, 76 to 96, 121 to 141, and 149 to 169; these read FPII…ATAA, ITLI…NAIF, WKPT…HFFG, LSWA…VYNF, and FKLF…AFYI.

The protein belongs to the YciB family.

Its subcellular location is the cell inner membrane. Its function is as follows. Plays a role in cell envelope biogenesis, maintenance of cell envelope integrity and membrane homeostasis. This Coxiella burnetii (strain CbuG_Q212) (Coxiella burnetii (strain Q212)) protein is Inner membrane-spanning protein YciB.